The following is a 500-amino-acid chain: Probable cytosol aminopeptidase (500 aa).

Mn(2+) is bound by residues K265 and D270. K277 is a catalytic residue. The Mn(2+) site is built by D288, D347, and E349. The active site involves R351.

It belongs to the peptidase M17 family. It depends on Mn(2+) as a cofactor.

It localises to the cytoplasm. The enzyme catalyses Release of an N-terminal amino acid, Xaa-|-Yaa-, in which Xaa is preferably Leu, but may be other amino acids including Pro although not Arg or Lys, and Yaa may be Pro. Amino acid amides and methyl esters are also readily hydrolyzed, but rates on arylamides are exceedingly low.. The catalysed reaction is Release of an N-terminal amino acid, preferentially leucine, but not glutamic or aspartic acids.. In terms of biological role, presumably involved in the processing and regular turnover of intracellular proteins. Catalyzes the removal of unsubstituted N-terminal amino acids from various peptides. The protein is Probable cytosol aminopeptidase of Bdellovibrio bacteriovorus (strain ATCC 15356 / DSM 50701 / NCIMB 9529 / HD100).